Consider the following 166-residue polypeptide: MAKENSFDIVSRVDMQEVLNAVNQALREIETRFDFRGSKSRIIFENKPEITLISDDDFKLRNVIDILESKLIKRGINLKALRYGKVESAAGDTVRQVVTLVQGIEQDIAKKIVKAIKDSKVKVQASVQGDQVRVSGKNRDDLQLAINVVKGTELDIPVEFTNYRTI.

Belongs to the YajQ family.

In terms of biological role, nucleotide-binding protein. This chain is Nucleotide-binding protein Dred_1927, found in Desulforamulus reducens (strain ATCC BAA-1160 / DSM 100696 / MI-1) (Desulfotomaculum reducens).